The chain runs to 250 residues: Osmotin-like protein OSML15 (250 aa).

The N-terminal stretch at 1-21 (MSHLTTCLVFFLLAFVTYTNA) is a signal peptide. 8 disulfide bridges follow: cysteine 31-cysteine 226, cysteine 73-cysteine 83, cysteine 88-cysteine 94, cysteine 142-cysteine 214, cysteine 147-cysteine 197, cysteine 155-cysteine 165, cysteine 169-cysteine 178, and cysteine 179-cysteine 184.

This sequence belongs to the thaumatin family.

This is Osmotin-like protein OSML15 from Solanum commersonii (Commerson's wild potato).